The sequence spans 141 residues: Hemoglobin subunit alpha (141 aa).

The Globin domain maps to 1–141 (VLSAEDKANV…VSTVLTSKYR (141 aa)). At Ser-3 the chain carries Phosphoserine. N6-succinyllysine occurs at positions 7 and 11. N6-acetyllysine; alternate is present on Lys-16. Lys-16 bears the N6-succinyllysine; alternate mark. Tyr-24 carries the phosphotyrosine modification. A Phosphoserine modification is found at Ser-35. N6-succinyllysine is present on Lys-40. Ser-49 bears the Phosphoserine mark. Residue His-58 participates in O2 binding. Residue His-87 participates in heme b binding. Ser-102 bears the Phosphoserine mark. Residue Thr-108 is modified to Phosphothreonine. 2 positions are modified to phosphoserine: Ser-124 and Ser-131. Phosphothreonine occurs at positions 134 and 137. At Ser-138 the chain carries Phosphoserine.

It belongs to the globin family. Heterotetramer of two alpha chains and two beta chains. In terms of tissue distribution, red blood cells.

Its function is as follows. Involved in oxygen transport from the lung to the various peripheral tissues. The sequence is that of Hemoglobin subunit alpha from Peromyscus crinitus (Canyon mouse).